The chain runs to 433 residues: Ornithine decarboxylase 1B, chloroplastic (433 aa).

Position 96 is an N6-(pyridoxal phosphate)lysine (K96). Pyridoxal 5'-phosphate contacts are provided by residues S228, G266, and 299–302; that span reads EPGR. 342–343 is a substrate binding site; the sequence is YD. Residue C378 is the Proton donor; shared with dimeric partner of the active site. D379 serves as a coordination point for substrate. Y407 serves as a coordination point for pyridoxal 5'-phosphate.

Belongs to the Orn/Lys/Arg decarboxylase class-II family. Homodimer. Only the dimer is catalytically active, as the active sites are constructed of residues from both monomers. Pyridoxal 5'-phosphate serves as cofactor.

It localises to the plastid. Its subcellular location is the chloroplast. The catalysed reaction is L-ornithine + H(+) = putrescine + CO2. It functions in the pathway alkaloid biosynthesis; nicotine biosynthesis. Its pathway is amine and polyamine biosynthesis; putrescine biosynthesis via L-ornithine pathway; putrescine from L-ornithine: step 1/1. Involved in the biosynthesis of pyridine alkaloid natural products, leading mainly to the production of anabasine, anatabine, nicotine and nornicotine, effective deterrents against herbivores with antiparasitic and pesticide properties (neurotoxins); nornicotine serves as the precursor in the synthesis of the carcinogen compound N'-nitrosonornicotine (NNN). Catalyzes the first and rate-limiting step of polyamine biosynthesis that converts ornithine into putrescine, which is the precursor for the polyamines, spermidine and spermine. Polyamines are essential for cell proliferation and are implicated in cellular processes, ranging from DNA replication to apoptosis. The chain is Ornithine decarboxylase 1B, chloroplastic from Nicotiana tabacum (Common tobacco).